The primary structure comprises 509 residues: ATP synthase subunit alpha, mitochondrial (509 aa).

171–178 (GDRQTGKT) is a binding site for ATP.

It belongs to the ATPase alpha/beta chains family. In terms of assembly, F-type ATPases have 2 components, CF(1) - the catalytic core - and CF(0) - the membrane proton channel. CF(1) has five subunits: alpha(3), beta(3), gamma(1), delta(1), epsilon(1). CF(0) has three main subunits: a, b and c.

It is found in the mitochondrion. The protein localises to the mitochondrion inner membrane. Its function is as follows. Mitochondrial membrane ATP synthase (F(1)F(0) ATP synthase or Complex V) produces ATP from ADP in the presence of a proton gradient across the membrane which is generated by electron transport complexes of the respiratory chain. F-type ATPases consist of two structural domains, F(1) - containing the extramembraneous catalytic core, and F(0) - containing the membrane proton channel, linked together by a central stalk and a peripheral stalk. During catalysis, ATP synthesis in the catalytic domain of F(1) is coupled via a rotary mechanism of the central stalk subunits to proton translocation. Subunits alpha and beta form the catalytic core in F(1). Rotation of the central stalk against the surrounding alpha(3)beta(3) subunits leads to hydrolysis of ATP in three separate catalytic sites on the beta subunits. Subunit alpha does not bear the catalytic high-affinity ATP-binding sites. In Oryza sativa subsp. indica (Rice), this protein is ATP synthase subunit alpha, mitochondrial (ATPA).